Reading from the N-terminus, the 129-residue chain is Small ribosomal subunit protein uS11 (129 aa).

The protein belongs to the universal ribosomal protein uS11 family. Part of the 30S ribosomal subunit. Interacts with proteins S7 and S18. Binds to IF-3.

Its function is as follows. Located on the platform of the 30S subunit, it bridges several disparate RNA helices of the 16S rRNA. Forms part of the Shine-Dalgarno cleft in the 70S ribosome. This is Small ribosomal subunit protein uS11 from Lactobacillus gasseri (strain ATCC 33323 / DSM 20243 / BCRC 14619 / CIP 102991 / JCM 1131 / KCTC 3163 / NCIMB 11718 / NCTC 13722 / AM63).